The primary structure comprises 790 residues: Cadherin-6 (790 aa).

Positions 1-18 (MRTYRYFLLLFWVGQPYP) are cleaved as a signal peptide. A propeptide spanning residues 19–53 (TFSTPLSKRTSGFPAKKRTLELSGNSKNELSRSKR) is cleaved from the precursor. 5 consecutive Cadherin domains span residues 54–159 (SWMW…EPIF), 160–268 (TKEV…PPRF), 269–383 (PQST…PPVF), 384–486 (SKLA…DNPP), and 487–608 (EFAE…LVHP). The Extracellular segment spans residues 54–615 (SWMWNQFFLL…VHPTGLSTGA (562 aa)). Asn255 carries an N-linked (GlcNAc...) asparagine glycan. The disordered stretch occupies residues 261 to 291 (VNDNPPRFPQSTYQFKTPESSPPGTPIGRIK). The segment covering 269–279 (PQSTYQFKTPE) has biased composition (polar residues). Asn399, Asn437, Asn455, and Asn536 each carry an N-linked (GlcNAc...) asparagine glycan. Residues 616–636 (LIAILLCIVTLLVTVVLFAAL) form a helical membrane-spanning segment. The Cytoplasmic portion of the chain corresponds to 637 to 790 (RRQRKKEPLI…YGGVDSDKDS (154 aa)). Residues Ser786 and Ser790 each carry the phosphoserine modification.

The protein resides in the cell membrane. In terms of biological role, cadherins are calcium-dependent cell adhesion proteins. They preferentially interact with themselves in a homophilic manner in connecting cells; cadherins may thus contribute to the sorting of heterogeneous cell types. In Bos taurus (Bovine), this protein is Cadherin-6 (CDH6).